The chain runs to 635 residues: Threonine--tRNA ligase (635 aa).

One can recognise a TGS domain in the interval 1–58; the sequence is MIRVICNNETVELPKGATAADFASKIKNSHYFAGVVINDQIKDLSTTLNEGDTLRFVT. The tract at residues 237–528 is catalytic; the sequence is DHRVLGAKLD…LIEHFKGKFP (292 aa). Zn(2+)-binding residues include Cys-328, His-379, and His-505.

The protein belongs to the class-II aminoacyl-tRNA synthetase family. As to quaternary structure, homodimer. It depends on Zn(2+) as a cofactor.

The protein resides in the cytoplasm. It catalyses the reaction tRNA(Thr) + L-threonine + ATP = L-threonyl-tRNA(Thr) + AMP + diphosphate + H(+). Catalyzes the attachment of threonine to tRNA(Thr) in a two-step reaction: L-threonine is first activated by ATP to form Thr-AMP and then transferred to the acceptor end of tRNA(Thr). Also edits incorrectly charged L-seryl-tRNA(Thr). This is Threonine--tRNA ligase from Chlamydia caviae (strain ATCC VR-813 / DSM 19441 / 03DC25 / GPIC) (Chlamydophila caviae).